A 230-amino-acid chain; its full sequence is U2 small nuclear ribonucleoprotein A' (230 aa).

LRR repeat units follow at residues lysine 19 to proline 40, arginine 41 to serine 62, and glycine 65 to arginine 86. The LRRCT domain maps to asparagine 99–leucine 137. The tract at residues glycine 211–leucine 230 is disordered. The span at isoleucine 213 to asparagine 223 shows a compositional bias: gly residues.

The protein belongs to the U2 small nuclear ribonucleoprotein A family. In terms of assembly, associated with the spliceosome.

The protein resides in the nucleus. In terms of biological role, involved in pre-mRNA splicing. This chain is U2 small nuclear ribonucleoprotein A' (lea1), found in Emericella nidulans (strain FGSC A4 / ATCC 38163 / CBS 112.46 / NRRL 194 / M139) (Aspergillus nidulans).